Reading from the N-terminus, the 443-residue chain is Acid phosphatase type 7 (443 aa).

Positions 1 to 23 (MAAAPPPPPPLLLLLLCVCAVFA) are cleaved as a signal peptide. Asn-53, Asn-76, and Asn-126 each carry an N-linked (GlcNAc...) asparagine glycan. Positions 140, 169, and 172 each coordinate Fe cation. Position 169 (Asp-169) interacts with Zn(2+). Zn(2+) is bound at residue Asn-204. N-linked (GlcNAc...) asparagine glycosylation occurs at Asn-210. His-288 contributes to the Zn(2+) binding site. An N-linked (GlcNAc...) asparagine glycan is attached at Asn-313. His-338 is a binding site for Zn(2+). His-340 lines the Fe cation pocket. Residues Asn-355 and Asn-409 are each glycosylated (N-linked (GlcNAc...) asparagine).

Belongs to the metallophosphoesterase superfamily. Purple acid phosphatase family. The cofactor is Fe cation. Requires Zn(2+) as cofactor.

It is found in the secreted. It carries out the reaction a phosphate monoester + H2O = an alcohol + phosphate. The polypeptide is Acid phosphatase type 7 (Danio rerio (Zebrafish)).